The sequence spans 136 residues: Peptide methionine sulfoxide reductase MsrB (136 aa).

The 123-residue stretch at 6–128 folds into the MsrB domain; that stretch reads EVSLYKELTD…NSAALSFTDE (123 aa). Positions 45, 48, 94, and 97 each coordinate Zn(2+). Cysteine 117 serves as the catalytic Nucleophile.

This sequence belongs to the MsrB Met sulfoxide reductase family. Requires Zn(2+) as cofactor.

It carries out the reaction L-methionyl-[protein] + [thioredoxin]-disulfide + H2O = L-methionyl-(R)-S-oxide-[protein] + [thioredoxin]-dithiol. This is Peptide methionine sulfoxide reductase MsrB from Photorhabdus laumondii subsp. laumondii (strain DSM 15139 / CIP 105565 / TT01) (Photorhabdus luminescens subsp. laumondii).